Reading from the N-terminus, the 365-residue chain is UDP-N-acetylglucosamine--N-acetylmuramyl-(pentapeptide) pyrophosphoryl-undecaprenol N-acetylglucosamine transferase (365 aa).

UDP-N-acetyl-alpha-D-glucosamine is bound by residues 10-12 (TGG), Asn-128, Arg-170, Ser-199, Ile-250, and Gln-295.

Belongs to the glycosyltransferase 28 family. MurG subfamily.

The protein localises to the cell inner membrane. It catalyses the reaction di-trans,octa-cis-undecaprenyl diphospho-N-acetyl-alpha-D-muramoyl-L-alanyl-D-glutamyl-meso-2,6-diaminopimeloyl-D-alanyl-D-alanine + UDP-N-acetyl-alpha-D-glucosamine = di-trans,octa-cis-undecaprenyl diphospho-[N-acetyl-alpha-D-glucosaminyl-(1-&gt;4)]-N-acetyl-alpha-D-muramoyl-L-alanyl-D-glutamyl-meso-2,6-diaminopimeloyl-D-alanyl-D-alanine + UDP + H(+). Its pathway is cell wall biogenesis; peptidoglycan biosynthesis. Cell wall formation. Catalyzes the transfer of a GlcNAc subunit on undecaprenyl-pyrophosphoryl-MurNAc-pentapeptide (lipid intermediate I) to form undecaprenyl-pyrophosphoryl-MurNAc-(pentapeptide)GlcNAc (lipid intermediate II). The chain is UDP-N-acetylglucosamine--N-acetylmuramyl-(pentapeptide) pyrophosphoryl-undecaprenol N-acetylglucosamine transferase from Chlorobium luteolum (strain DSM 273 / BCRC 81028 / 2530) (Pelodictyon luteolum).